Here is a 690-residue protein sequence, read N- to C-terminus: Molting protein mlt-10 (690 aa).

The first 18 residues, 1-18, serve as a signal peptide directing secretion; that stretch reads MRNLNLILFTALAAVTYA. N-linked (GlcNAc...) asparagine glycans are attached at residues asparagine 42 and asparagine 204. Residues 219 to 285 adopt a coiled-coil conformation; sequence IKKLGEEAKR…MRKKEADEIR (67 aa). N-linked (GlcNAc...) asparagine glycans are attached at residues asparagine 305 and asparagine 415. The next 5 helical transmembrane spans lie at 514-534, 544-564, 579-599, 618-638, and 643-663; these read PFILTPLTFASAPLSNTFIVL, LSPAVLGPIILSPWVFVPLIL, FSPIILSPLVLHPLILVPGVF, VFTPLILSPFALNPLILTPMV, and ILSPFVLSPIILSPQALFAVV.

Belongs to the mlt-10-like family. Expressed in the major body hypodermal syncytium (Hyp7), the dorsal and ventral ridges of the hypodermis, hypodermal cells in the head and tail, and the pharyngeal myoepithelium, but not the lateral seam cells.

The protein localises to the membrane. It localises to the secreted. Its function is as follows. Required for the efficient removal of larval cuticles during the molting cycle as well as the synthesis of new cuticles. The protein is Molting protein mlt-10 of Caenorhabditis elegans.